A 524-amino-acid polypeptide reads, in one-letter code: MSDRVIIFDTTLRDGEQALAASLTVKEKLQIAQALERLGVDVMEVGFPVSSPGDFQSVQTIARHIKQSRVCALARALPKDIDAAGEALRVAEAFRIHTFISTSSIHVESKLKKSFEDVLEMGVSAIKHARRYTDDVEFSCEDAGRTPIDNLCRMVEAAIKAGARTINIPDTVGYTVPTEFSGIIQTLFNRVPNIDQAIISVHCHDDLGLSVANSIGAVQMGARQIECTINGIGERAGNCSLEEVAMILKTRADLLGVHTNIRHSEIHRTSALVSQLCNMPVQPNKAIVGANAFSHSSGIHQDGVLKAKNTYEIITPESIGLTQNNLNMTSRSGRHVIKHRMESMGYAESSYDLDDLYGKFLTLADKKGQVFDYDLEALAFFSQIHEEPEHFKLEYLGVQSGSSVMATASVKLKVGQEIVSEAATGNGPVDAVYQCINRITGYEISIDKYELKGKGEGKNALGQVDIVAQYKGRKFHGMGLATDIIESSAQALIHVINSIWRADQVAEQMERNVAKTDKINTESV.

One can recognise a Pyruvate carboxyltransferase domain in the interval 5–267; sequence VIIFDTTLRD…HTNIRHSEIH (263 aa). Positions 14, 202, 204, and 238 each coordinate Mn(2+). The segment at 392–524 is regulatory domain; it reads KLEYLGVQSG…KTDKINTESV (133 aa).

This sequence belongs to the alpha-IPM synthase/homocitrate synthase family. LeuA type 1 subfamily. As to quaternary structure, homodimer. It depends on Mn(2+) as a cofactor.

It localises to the cytoplasm. It catalyses the reaction 3-methyl-2-oxobutanoate + acetyl-CoA + H2O = (2S)-2-isopropylmalate + CoA + H(+). Its pathway is amino-acid biosynthesis; L-leucine biosynthesis; L-leucine from 3-methyl-2-oxobutanoate: step 1/4. In terms of biological role, catalyzes the condensation of the acetyl group of acetyl-CoA with 3-methyl-2-oxobutanoate (2-ketoisovalerate) to form 3-carboxy-3-hydroxy-4-methylpentanoate (2-isopropylmalate). The chain is 2-isopropylmalate synthase from Aeromonas hydrophila subsp. hydrophila (strain ATCC 7966 / DSM 30187 / BCRC 13018 / CCUG 14551 / JCM 1027 / KCTC 2358 / NCIMB 9240 / NCTC 8049).